A 159-amino-acid chain; its full sequence is Transcription elongation factor GreA (159 aa).

It belongs to the GreA/GreB family.

Necessary for efficient RNA polymerase transcription elongation past template-encoded arresting sites. The arresting sites in DNA have the property of trapping a certain fraction of elongating RNA polymerases that pass through, resulting in locked ternary complexes. Cleavage of the nascent transcript by cleavage factors such as GreA or GreB allows the resumption of elongation from the new 3'terminus. GreA releases sequences of 2 to 3 nucleotides. In Buchnera aphidicola subsp. Acyrthosiphon pisum (strain APS) (Acyrthosiphon pisum symbiotic bacterium), this protein is Transcription elongation factor GreA.